The primary structure comprises 227 residues: Ras-related protein Rab-3C (227 aa).

GTP-binding residues include Ser39, Gly42, Lys43, Thr44, Ser45, Thr56, Ser57, Ser61, and Thr62. Residue Thr44 coordinates Mg(2+). The short motif at 53–66 is the Switch 1 element; it reads DSFTSAFVSTVGID. The Mg(2+) site is built by Thr62 and Asp85. Position 86 is a phosphothreonine (Thr86). Positions 86-104 match the Switch 2 motif; the sequence is TAGQERYRTITTAYYRGAM. 6 residues coordinate GTP: Gly88, Asn143, Lys144, Asp146, Ala174, and Lys175. 2 positions are modified to phosphoserine: Ser196 and Ser198. Position 206 is a phosphothreonine (Thr206). S-geranylgeranyl cysteine attachment occurs at residues Cys225 and Cys227. Cysteine methyl ester is present on Cys227.

The protein belongs to the small GTPase superfamily. Rab family. Interacts with RIMS1, RIMS2, RPH3A and RPH3AL. The GTP-bound form interacts with REP15. Interacts with GDI2, CHM and CHML; phosphorylation at Thr-86 disrupts these interactions. Interacts with MADD (via uDENN domain); the GTP-bound form is preferred for interaction. It depends on Mg(2+) as a cofactor. Post-translationally, phosphorylation of Thr-86 in the switch II region by LRRK2 prevents the association of RAB regulatory proteins, including CHM, CHML and RAB GDP dissociation inhibitor GDI2.

It localises to the cell membrane. The catalysed reaction is GTP + H2O = GDP + phosphate + H(+). Regulated by guanine nucleotide exchange factors (GEFs) which promote the exchange of bound GDP for free GTP. Regulated by GTPase activating proteins (GAPs) which increase the GTP hydrolysis activity. Inhibited by GDP dissociation inhibitors (GDIs) which prevent Rab-GDP dissociation. Its function is as follows. The small GTPases Rab are key regulators of intracellular membrane trafficking, from the formation of transport vesicles to their fusion with membranes. Rabs cycle between an inactive GDP-bound form and an active GTP-bound form that is able to recruit to membranes different sets of downstream effectors directly responsible for vesicle formation, movement, tethering and fusion. In Bos taurus (Bovine), this protein is Ras-related protein Rab-3C (RAB3C).